Consider the following 201-residue polypeptide: 3-isopropylmalate dehydratase small subunit (201 aa).

The protein belongs to the LeuD family. LeuD type 1 subfamily. Heterodimer of LeuC and LeuD.

The catalysed reaction is (2R,3S)-3-isopropylmalate = (2S)-2-isopropylmalate. Its pathway is amino-acid biosynthesis; L-leucine biosynthesis; L-leucine from 3-methyl-2-oxobutanoate: step 2/4. Its function is as follows. Catalyzes the isomerization between 2-isopropylmalate and 3-isopropylmalate, via the formation of 2-isopropylmaleate. This is 3-isopropylmalate dehydratase small subunit from Salmonella paratyphi A (strain ATCC 9150 / SARB42).